The sequence spans 390 residues: Tuftelin (390 aa).

Coiled coils occupy residues 88 to 126 (DKMI…KLDR) and 162 to 351 (DTCI…IEKQ). A disordered region spans residues 358 to 390 (STQARAKTENPGSIRISKPPSPKPMPVIRVVET).

Belongs to the tuftelin family. As to quaternary structure, interacts with TFIP11. Expressed in the epidermis (at protein level). Present in the extracellular enamel and is mainly associated with the crystal component.

The protein resides in the secreted. Functionally, involved in the structural organization of the epidermis. Involved in the mineralization and structural organization of enamel. This chain is Tuftelin (TUFT1), found in Homo sapiens (Human).